Here is a 431-residue protein sequence, read N- to C-terminus: Gamma-glutamyl phosphate reductase (431 aa).

The protein belongs to the gamma-glutamyl phosphate reductase family.

Its subcellular location is the cytoplasm. It carries out the reaction L-glutamate 5-semialdehyde + phosphate + NADP(+) = L-glutamyl 5-phosphate + NADPH + H(+). Its pathway is amino-acid biosynthesis; L-proline biosynthesis; L-glutamate 5-semialdehyde from L-glutamate: step 2/2. In terms of biological role, catalyzes the NADPH-dependent reduction of L-glutamate 5-phosphate into L-glutamate 5-semialdehyde and phosphate. The product spontaneously undergoes cyclization to form 1-pyrroline-5-carboxylate. This chain is Gamma-glutamyl phosphate reductase, found in Methylobacterium sp. (strain 4-46).